A 253-amino-acid polypeptide reads, in one-letter code: Indole-3-glycerol phosphate synthase (253 aa).

Belongs to the TrpC family.

The enzyme catalyses 1-(2-carboxyphenylamino)-1-deoxy-D-ribulose 5-phosphate + H(+) = (1S,2R)-1-C-(indol-3-yl)glycerol 3-phosphate + CO2 + H2O. It functions in the pathway amino-acid biosynthesis; L-tryptophan biosynthesis; L-tryptophan from chorismate: step 4/5. The protein is Indole-3-glycerol phosphate synthase of Bacillus cereus (strain AH187).